We begin with the raw amino-acid sequence, 296 residues long: Probable lipid kinase YegS-like (296 aa).

One can recognise a DAGKc domain in the interval 1 to 130 (MPHTLLILNG…IDLAQVNGEH (130 aa)). Residues T37, 63–69 (GDGTINE), and T92 each bind ATP. Mg(2+)-binding residues include L212, D215, and L217. The active-site Proton acceptor is the E268.

Belongs to the diacylglycerol/lipid kinase family. YegS lipid kinase subfamily. Mg(2+) serves as cofactor. The cofactor is Ca(2+).

Its subcellular location is the cytoplasm. Probably phosphorylates lipids; the in vivo substrate is unknown. In Yersinia pestis bv. Antiqua (strain Angola), this protein is Probable lipid kinase YegS-like.